A 307-amino-acid polypeptide reads, in one-letter code: Porphobilinogen deaminase (307 aa).

At Cys241 the chain carries S-(dipyrrolylmethanemethyl)cysteine.

It belongs to the HMBS family. Monomer. Dipyrromethane is required as a cofactor.

The catalysed reaction is 4 porphobilinogen + H2O = hydroxymethylbilane + 4 NH4(+). It participates in porphyrin-containing compound metabolism; protoporphyrin-IX biosynthesis; coproporphyrinogen-III from 5-aminolevulinate: step 2/4. In terms of biological role, tetrapolymerization of the monopyrrole PBG into the hydroxymethylbilane pre-uroporphyrinogen in several discrete steps. The chain is Porphobilinogen deaminase from Coxiella burnetii (strain CbuG_Q212) (Coxiella burnetii (strain Q212)).